We begin with the raw amino-acid sequence, 154 residues long: Ribonuclease H (154 aa).

One can recognise an RNase H type-1 domain in the interval 1–142 (MTKQVEIFTD…CDELAREGAN (142 aa)). Asp10, Glu48, Asp70, and Asp134 together coordinate Mg(2+).

This sequence belongs to the RNase H family. In terms of assembly, monomer. Requires Mg(2+) as cofactor.

It localises to the cytoplasm. It carries out the reaction Endonucleolytic cleavage to 5'-phosphomonoester.. In terms of biological role, endonuclease that specifically degrades the RNA of RNA-DNA hybrids. The polypeptide is Ribonuclease H (Yersinia enterocolitica serotype O:8 / biotype 1B (strain NCTC 13174 / 8081)).